Here is a 416-residue protein sequence, read N- to C-terminus: Dihydrolipoyllysine-residue succinyltransferase component of 2-oxoglutarate dehydrogenase complex (416 aa).

The Lipoyl-binding domain maps to 3-78; that stretch reads IVDVKVPQLS…VADEIIAKID (76 aa). At lysine 44 the chain carries N6-lipoyllysine. The region spanning 115–152 is the Peripheral subunit-binding (PSBD) domain; that stretch reads VAMPSAAKLMAEAGLSAGQVAGTGKDGRITKGDALAAA. Residues histidine 387 and aspartate 391 contribute to the active site.

Belongs to the 2-oxoacid dehydrogenase family. As to quaternary structure, forms a 24-polypeptide structural core with octahedral symmetry. Part of the 2-oxoglutarate dehydrogenase (OGDH) complex composed of E1 (2-oxoglutarate dehydrogenase), E2 (dihydrolipoamide succinyltransferase) and E3 (dihydrolipoamide dehydrogenase); the complex contains multiple copies of the three enzymatic components (E1, E2 and E3). Requires (R)-lipoate as cofactor.

It catalyses the reaction N(6)-[(R)-dihydrolipoyl]-L-lysyl-[protein] + succinyl-CoA = N(6)-[(R)-S(8)-succinyldihydrolipoyl]-L-lysyl-[protein] + CoA. It participates in amino-acid degradation; L-lysine degradation via saccharopine pathway; glutaryl-CoA from L-lysine: step 6/6. E2 component of the 2-oxoglutarate dehydrogenase (OGDH) complex which catalyzes the second step in the conversion of 2-oxoglutarate to succinyl-CoA and CO(2). This is Dihydrolipoyllysine-residue succinyltransferase component of 2-oxoglutarate dehydrogenase complex (sucB) from Cupriavidus necator (strain ATCC 17699 / DSM 428 / KCTC 22496 / NCIMB 10442 / H16 / Stanier 337) (Ralstonia eutropha).